Reading from the N-terminus, the 185-residue chain is Meiotic recombination protein REC104 (185 aa).

The segment at 146 to 168 (ANETRPLSSSSTPQILQSDYSVV) is disordered.

Its function is as follows. Potential transcriptional regulator that is required to activate expression of a number of early meiotic genes including HOP1. This Saccharomyces pastorianus (Lager yeast) protein is Meiotic recombination protein REC104 (REC104).